The chain runs to 209 residues: Large ribosomal subunit protein uL3 (209 aa).

Residues Thr133–Gly153 are disordered. At Gln150 the chain carries N5-methylglutamine.

Belongs to the universal ribosomal protein uL3 family. As to quaternary structure, part of the 50S ribosomal subunit. Forms a cluster with proteins L14 and L19. Post-translationally, methylated by PrmB.

Its function is as follows. One of the primary rRNA binding proteins, it binds directly near the 3'-end of the 23S rRNA, where it nucleates assembly of the 50S subunit. The protein is Large ribosomal subunit protein uL3 of Serratia proteamaculans (strain 568).